The chain runs to 435 residues: Nucleosome assembly protein 1 (435 aa).

Residues 1-51 form a disordered region; that stretch reads MTEQPINTKKKNGDISKAPTPQNTPASVTNSYMRSKPPTVSTIQESNNEDG. S16 bears the Phosphoserine mark. The segment covering 19-50 has biased composition (polar residues); it reads PTPQNTPASVTNSYMRSKPPTVSTIQESNNED. Phosphothreonine is present on residues T20 and T24. S27 is modified (phosphoserine). Residue T29 is modified to Phosphothreonine. A phosphoserine mark is found at S31 and S35. T42 bears the Phosphothreonine mark. S46 is subject to Phosphoserine. T52 carries the phosphothreonine modification. Composition is skewed to acidic residues over residues 146 to 185 and 338 to 355; these read PTVE…EDEQ and EAND…DEEL. 2 disordered regions span residues 146–187 and 308–435; these read PTVE…EQGI and ESFF…CKQQ. The segment covering 356–374 has biased composition (basic and acidic residues); that stretch reads EARLELDYQLGEEIKDRLI. Residues 386-421 are compositionally biased toward acidic residues; that stretch reads VDFDYPELEGEGDEDEYSDEDGEGDSDDDDDDDDEA.

Belongs to the nucleosome assembly protein (NAP) family. As to quaternary structure, component of the GIN4 complex which forms a ring at the bud neck. Phosphorylation is cell cycle dependent and is important for its bud neck localization. Phosphorylation is highest in newly collected G1 cells, declines when the cells are traversing through the G1 phase, and reaches the lowest level around the time of bud emergence. Phosphorylation increases and remains high through the rest of the cell cycle until the beginning of the next one, when it decreases again. Phosphorylation involves two septin ring-associated kinases, CLA4 and GIN4, and its dephosphorylation occurs at the septin ring in a manner dependent on the phosphatases PP2A and CDC14.

The protein resides in the bud neck. The protein localises to the bud tip. In terms of biological role, acidic protein, which assembles histones into an octamer. Involved in the regulation of the localization and the function of the septins during mitosis. The polypeptide is Nucleosome assembly protein 1 (NAP1) (Candida albicans (strain SC5314 / ATCC MYA-2876) (Yeast)).